The sequence spans 150 residues: Flagellar assembly factor FliW (150 aa).

The protein belongs to the FliW family. Interacts with translational regulator CsrA. Interacts with flagellins FlaB1, FlaB2 and FlaB3.

It localises to the cytoplasm. Its function is as follows. Acts as an anti-CsrA protein, binds CsrA and prevents it from repressing translation of its target genes, one of which is flagellin. Binds to flagellin and participates in the assembly of the flagellum. Functionally, binds to the C-terminal region of flagellin, which is implicated in polymerization, and participates in the assembly of the flagellum. In Treponema pallidum (strain Nichols), this protein is Flagellar assembly factor FliW.